A 353-amino-acid polypeptide reads, in one-letter code: Deoxyribonuclease-2-alpha (353 aa).

The first 19 residues, 1 to 19 (MATLRSLLLAALLWVPAEA), serve as a signal peptide directing secretion. A disulfide bond links cysteine 22 and cysteine 161. Asparagine 71, asparagine 88, asparagine 214, and asparagine 268 each carry an N-linked (GlcNAc...) asparagine glycan. Intrachain disulfides connect cysteine 269/cysteine 349 and cysteine 310/cysteine 329. Residue histidine 297 is part of the active site.

The protein belongs to the DNase II family. Highly expressed in fetal liver macrophages.

The protein localises to the lysosome. It catalyses the reaction Endonucleolytic cleavage to nucleoside 3'-phosphates and 3'-phosphooligonucleotide end-products.. Functionally, hydrolyzes DNA under acidic conditions with a preference for double-stranded DNA. Plays a major role in the clearance of nucleic acids generated through apoptosis, hence preventing autoinflammation. Necessary for proper fetal development and for definitive erythropoiesis in fetal liver and bone marrow, where it degrades nuclear DNA expelled from erythroid precursor cells. The chain is Deoxyribonuclease-2-alpha (Dnase2) from Mus musculus (Mouse).